A 365-amino-acid chain; its full sequence is Methylthioribose-1-phosphate isomerase (365 aa).

Catalysis depends on aspartate 249, which acts as the Proton donor.

This sequence belongs to the eIF-2B alpha/beta/delta subunits family. MtnA subfamily.

The protein resides in the cytoplasm. It is found in the nucleus. It catalyses the reaction 5-(methylsulfanyl)-alpha-D-ribose 1-phosphate = 5-(methylsulfanyl)-D-ribulose 1-phosphate. It participates in amino-acid biosynthesis; L-methionine biosynthesis via salvage pathway; L-methionine from S-methyl-5-thio-alpha-D-ribose 1-phosphate: step 1/6. In terms of biological role, catalyzes the interconversion of methylthioribose-1-phosphate (MTR-1-P) into methylthioribulose-1-phosphate (MTRu-1-P). In Ostreococcus lucimarinus (strain CCE9901), this protein is Methylthioribose-1-phosphate isomerase.